Consider the following 187-residue polypeptide: Protein GrpE (187 aa).

Residues 1–22 (MADEQNLDAQAQDQAAEAGAGD) form a disordered region. Positions 7 to 22 (LDAQAQDQAAEAGAGD) are enriched in low complexity.

Belongs to the GrpE family. In terms of assembly, homodimer.

It is found in the cytoplasm. In terms of biological role, participates actively in the response to hyperosmotic and heat shock by preventing the aggregation of stress-denatured proteins, in association with DnaK and GrpE. It is the nucleotide exchange factor for DnaK and may function as a thermosensor. Unfolded proteins bind initially to DnaJ; upon interaction with the DnaJ-bound protein, DnaK hydrolyzes its bound ATP, resulting in the formation of a stable complex. GrpE releases ADP from DnaK; ATP binding to DnaK triggers the release of the substrate protein, thus completing the reaction cycle. Several rounds of ATP-dependent interactions between DnaJ, DnaK and GrpE are required for fully efficient folding. This Pseudomonas syringae pv. tomato (strain ATCC BAA-871 / DC3000) protein is Protein GrpE.